A 303-amino-acid polypeptide reads, in one-letter code: Sulfate adenylyltransferase subunit 2 (303 aa).

Belongs to the PAPS reductase family. CysD subfamily. As to quaternary structure, heterodimer composed of CysD, the smaller subunit, and CysN.

It carries out the reaction sulfate + ATP + H(+) = adenosine 5'-phosphosulfate + diphosphate. The protein operates within sulfur metabolism; hydrogen sulfide biosynthesis; sulfite from sulfate: step 1/3. Functionally, with CysN forms the ATP sulfurylase (ATPS) that catalyzes the adenylation of sulfate producing adenosine 5'-phosphosulfate (APS) and diphosphate, the first enzymatic step in sulfur assimilation pathway. APS synthesis involves the formation of a high-energy phosphoric-sulfuric acid anhydride bond driven by GTP hydrolysis by CysN coupled to ATP hydrolysis by CysD. In Akkermansia muciniphila (strain ATCC BAA-835 / DSM 22959 / JCM 33894 / BCRC 81048 / CCUG 64013 / CIP 107961 / Muc), this protein is Sulfate adenylyltransferase subunit 2.